We begin with the raw amino-acid sequence, 513 residues long: ATP synthase subunit alpha (513 aa).

169–176 contacts ATP; the sequence is GDRQIGKT.

This sequence belongs to the ATPase alpha/beta chains family. In terms of assembly, F-type ATPases have 2 components, CF(1) - the catalytic core - and CF(0) - the membrane proton channel. CF(1) has five subunits: alpha(3), beta(3), gamma(1), delta(1), epsilon(1). CF(0) has three main subunits: a(1), b(2) and c(9-12). The alpha and beta chains form an alternating ring which encloses part of the gamma chain. CF(1) is attached to CF(0) by a central stalk formed by the gamma and epsilon chains, while a peripheral stalk is formed by the delta and b chains.

It localises to the cell inner membrane. It carries out the reaction ATP + H2O + 4 H(+)(in) = ADP + phosphate + 5 H(+)(out). Produces ATP from ADP in the presence of a proton gradient across the membrane. The alpha chain is a regulatory subunit. The chain is ATP synthase subunit alpha from Shewanella woodyi (strain ATCC 51908 / MS32).